The chain runs to 292 residues: ATP synthase gamma chain (292 aa).

Belongs to the ATPase gamma chain family. F-type ATPases have 2 components, CF(1) - the catalytic core - and CF(0) - the membrane proton channel. CF(1) has five subunits: alpha(3), beta(3), gamma(1), delta(1), epsilon(1). CF(0) has three main subunits: a, b and c.

Its subcellular location is the cell inner membrane. Produces ATP from ADP in the presence of a proton gradient across the membrane. The gamma chain is believed to be important in regulating ATPase activity and the flow of protons through the CF(0) complex. This Methylobacterium nodulans (strain LMG 21967 / CNCM I-2342 / ORS 2060) protein is ATP synthase gamma chain.